Reading from the N-terminus, the 191-residue chain is Nascent polypeptide-associated complex subunit alpha (191 aa).

Positions 24 to 89 (SRPERKARKA…AKVEDPNSAA (66 aa)) constitute an NAC-A/B domain. Residues 126–149 (QDAPSADSSAPAPSGEATDASASG) are disordered. The span at 127–139 (DAPSADSSAPAPS) shows a compositional bias: low complexity. Residues 153–191 (VSDEEIQLIVAQTGVDEAKAREAYISEKGDLINAIMKLQ) form the UBA domain.

The protein belongs to the NAC-alpha family. Part of the nascent polypeptide-associated complex (NAC), consisting of EGD2 and EGD1. NAC associates with ribosomes via EGD1.

The protein resides in the cytoplasm. The protein localises to the nucleus. Component of the nascent polypeptide-associated complex (NAC), a dynamic component of the ribosomal exit tunnel, protecting the emerging polypeptides from interaction with other cytoplasmic proteins to ensure appropriate nascent protein targeting. The NAC complex also promotes mitochondrial protein import by enhancing productive ribosome interactions with the outer mitochondrial membrane and blocks the inappropriate interaction of ribosomes translating non-secretory nascent polypeptides with translocation sites in the membrane of the endoplasmic reticulum. EGD2 may also be involved in transcription regulation. This is Nascent polypeptide-associated complex subunit alpha (EGD2) from Cryptococcus neoformans var. neoformans serotype D (strain B-3501A) (Filobasidiella neoformans).